The primary structure comprises 649 residues: Acetyl-coenzyme A synthetase (649 aa).

Residues 191 to 194 (RAGR), Thr-311, and Asn-335 each bind CoA. Residues 387–389 (GEP), 411–416 (DTWWQT), Asp-500, and Arg-515 contribute to the ATP site. Ser-523 lines the CoA pocket. Arg-526 contributes to the ATP binding site. Residues Val-537, Phe-539, and Ile-542 each contribute to the Mg(2+) site. Arg-584 contributes to the CoA binding site. Lys-609 carries the N6-acetyllysine modification.

This sequence belongs to the ATP-dependent AMP-binding enzyme family. Requires Mg(2+) as cofactor. Acetylated. Deacetylation by the SIR2-homolog deacetylase activates the enzyme.

The catalysed reaction is acetate + ATP + CoA = acetyl-CoA + AMP + diphosphate. In terms of biological role, catalyzes the conversion of acetate into acetyl-CoA (AcCoA), an essential intermediate at the junction of anabolic and catabolic pathways. AcsA undergoes a two-step reaction. In the first half reaction, AcsA combines acetate with ATP to form acetyl-adenylate (AcAMP) intermediate. In the second half reaction, it can then transfer the acetyl group from AcAMP to the sulfhydryl group of CoA, forming the product AcCoA. In Photobacterium profundum (strain SS9), this protein is Acetyl-coenzyme A synthetase.